The chain runs to 787 residues: Endonuclease MutS2 (787 aa).

Position 331-338 (331-338 (GPNTGGKT)) interacts with ATP. A Smr domain is found at 711–786 (IDVRGKTSDD…EQGVTVVELK (76 aa)).

Belongs to the DNA mismatch repair MutS family. MutS2 subfamily. As to quaternary structure, homodimer. Binds to stalled ribosomes, contacting rRNA.

Endonuclease that is involved in the suppression of homologous recombination and thus may have a key role in the control of bacterial genetic diversity. In terms of biological role, acts as a ribosome collision sensor, splitting the ribosome into its 2 subunits. Detects stalled/collided 70S ribosomes which it binds and splits by an ATP-hydrolysis driven conformational change. Acts upstream of the ribosome quality control system (RQC), a ribosome-associated complex that mediates the extraction of incompletely synthesized nascent chains from stalled ribosomes and their subsequent degradation. Probably generates substrates for RQC. The protein is Endonuclease MutS2 of Caldicellulosiruptor bescii (strain ATCC BAA-1888 / DSM 6725 / KCTC 15123 / Z-1320) (Anaerocellum thermophilum).